The primary structure comprises 80 residues: Large ribosomal subunit protein bL31B (80 aa).

This sequence belongs to the bacterial ribosomal protein bL31 family. Type B subfamily. As to quaternary structure, part of the 50S ribosomal subunit.

This Stenotrophomonas maltophilia (strain K279a) protein is Large ribosomal subunit protein bL31B.